A 491-amino-acid polypeptide reads, in one-letter code: UDP-N-acetylmuramate--L-alanine ligase (491 aa).

126-132 is an ATP binding site; that stretch reads GTHGKTT.

The protein belongs to the MurCDEF family.

It localises to the cytoplasm. It carries out the reaction UDP-N-acetyl-alpha-D-muramate + L-alanine + ATP = UDP-N-acetyl-alpha-D-muramoyl-L-alanine + ADP + phosphate + H(+). The protein operates within cell wall biogenesis; peptidoglycan biosynthesis. Functionally, cell wall formation. The chain is UDP-N-acetylmuramate--L-alanine ligase from Yersinia pestis (strain Pestoides F).